A 440-amino-acid chain; its full sequence is Damage-control phosphatase ARMT1 (440 aa).

Mn(2+) is bound by residues Asp-252 and Asn-253. Residue Asp-252–Asn-253 coordinates substrate. Residues Glu-257 and Asp-290 each coordinate S-adenosyl-L-methionine. Asp-290 provides a ligand contact to Mn(2+). Residues Asp-366–Arg-370 and Lys-403 contribute to the substrate site. A Subfamily III RTxK motif motif is present at residues Arg-400–Lys-403.

Belongs to the damage-control phosphatase family. Sugar phosphate phosphatase III subfamily. Mn(2+) serves as cofactor. Ni(2+) is required as a cofactor. Post-translationally, automethylated.

The catalysed reaction is beta-D-fructose 1-phosphate + H2O = D-fructose + phosphate. It catalyses the reaction beta-D-fructose 6-phosphate = dihydroxyacetone + D-glyceraldehyde 3-phosphate. It carries out the reaction L-glutamyl-[protein] + S-adenosyl-L-methionine = [protein]-L-glutamate 5-O-methyl ester + S-adenosyl-L-homocysteine. In terms of biological role, metal-dependent phosphatase that shows phosphatase activity against several substrates, including fructose-1-phosphate and fructose-6-phosphate. Its preference for fructose-1-phosphate, a strong glycating agent that causes DNA damage rather than a canonical yeast metabolite, suggests a damage-control function in hexose phosphate metabolism. Has also been shown to have O-methyltransferase activity that methylates glutamate residues of target proteins to form gamma-glutamyl methyl ester residues. Possibly methylates PCNA, suggesting it is involved in the DNA damage response. The chain is Damage-control phosphatase ARMT1 from Xenopus tropicalis (Western clawed frog).